The following is a 457-amino-acid chain: Oxygen-independent coproporphyrinogen III oxidase (457 aa).

The region spanning 47–279 (LKNPMPLSLY…EILESLISFL (233 aa)) is the Radical SAM core domain. Tyrosine 56 contacts S-adenosyl-L-methionine. 2 residues coordinate [4Fe-4S] cluster: cysteine 62 and cysteine 66. Phenylalanine 68 provides a ligand contact to S-adenosyl-L-methionine. Cysteine 69 lines the [4Fe-4S] cluster pocket. S-adenosyl-L-methionine-binding positions include glycine 113, 114-115 (GT), glutamate 147, glutamine 174, arginine 186, aspartate 211, alanine 245, and isoleucine 331.

This sequence belongs to the anaerobic coproporphyrinogen-III oxidase family. As to quaternary structure, monomer. Requires [4Fe-4S] cluster as cofactor.

It is found in the cytoplasm. The enzyme catalyses coproporphyrinogen III + 2 S-adenosyl-L-methionine = protoporphyrinogen IX + 2 5'-deoxyadenosine + 2 L-methionine + 2 CO2. The protein operates within porphyrin-containing compound metabolism; protoporphyrin-IX biosynthesis; protoporphyrinogen-IX from coproporphyrinogen-III (AdoMet route): step 1/1. In terms of biological role, involved in the heme biosynthesis. Catalyzes the anaerobic oxidative decarboxylation of propionate groups of rings A and B of coproporphyrinogen III to yield the vinyl groups in protoporphyrinogen IX. This chain is Oxygen-independent coproporphyrinogen III oxidase (hemN), found in Helicobacter pylori (strain J99 / ATCC 700824) (Campylobacter pylori J99).